The following is a 405-amino-acid chain: Serpin I2 (405 aa).

The signal sequence occupies residues 1-18; that stretch reads MDTIFLWSLLLLFFGSQA. Residues Asn-202, Asn-207, and Asn-306 are each glycosylated (N-linked (GlcNAc...) asparagine).

The protein belongs to the serpin family. As to expression, expressed in pancreas and adipose tissues.

It localises to the secreted. The chain is Serpin I2 (SERPINI2) from Homo sapiens (Human).